The primary structure comprises 94 residues: Co-chaperonin GroES (94 aa).

Belongs to the GroES chaperonin family. In terms of assembly, heptamer of 7 subunits arranged in a ring. Interacts with the chaperonin GroEL.

The protein resides in the cytoplasm. In terms of biological role, together with the chaperonin GroEL, plays an essential role in assisting protein folding. The GroEL-GroES system forms a nano-cage that allows encapsulation of the non-native substrate proteins and provides a physical environment optimized to promote and accelerate protein folding. GroES binds to the apical surface of the GroEL ring, thereby capping the opening of the GroEL channel. The chain is Co-chaperonin GroES from Staphylococcus epidermidis.